The primary structure comprises 265 residues: Histone H1 (265 aa).

Residues 1-27 (MATEEPIVAVETVPEPIVTEPTTITEP) show a composition bias toward low complexity. Disordered stretches follow at residues 1–66 (MATE…PTYE), 131–226 (AAKK…TTPG), and 242–265 (VKSV…GGRK). Residues 29–42 (VPEKEEPKAEVEKT) are compositionally biased toward basic and acidic residues. The span at 43–55 (KKAKGSKPKKASK) shows a compositional bias: basic residues. The region spanning 61–130 (SHPTYEEMIK…KVKGSFKLSA (70 aa)) is the H15 domain. Over residues 140-171 (PKAKTAAKAKSVKAKPAAKPKAKAVVKPKVAS) the composition is skewed to basic residues. Positions 186–202 (KPKTVAAKTKPTAAKPK) are enriched in low complexity. The span at 203-215 (AVVKPKSKVKPAK) shows a compositional bias: basic residues. A compositionally biased stretch (low complexity) spans 216–226 (VAKTSVKTTPG).

It belongs to the histone H1/H5 family.

The protein localises to the nucleus. It localises to the chromosome. Functionally, histones H1 are necessary for the condensation of nucleosome chains into higher-order structures. The protein is Histone H1 of Pisum sativum (Garden pea).